Here is a 478-residue protein sequence, read N- to C-terminus: MATFDRNDPQLAGTMFPTRIEANVFDLEIEGEIPRAINGSFFRNTPEPQVTTQPFHTFIDGDGLASAFHFEDGQVDFVSRWVCTPRFEAERSARKSLFGMYRNPFTDDPSVEGIDRTVANTSIITHHGKVLAAKEDGLPYELDPQTLETRGRYDYKGQVTSHTHTAHPKFDPQTGEMLLFGSAAKGERTLDMAYYIVDRYGKVTHETWFKQPYGAFMHDFAVTRNWSIFPIMPATNSLERLKAKQPIYMWEPERGSYIGVLPRRGQGKDIRWFRAPALWVFHVVNAWEEGNRILIDLMESEILPFPFPNSQNLPFDPSKAVPRLTRWEIDLNSGNDEMKRTQLHEYFAEMPIMDFRFALQDHRYAYMGVDDPRRPLAHQQAEKIFAYNSLGVWDNHRKDYELWFTGKMSAAQEPAFVPRSPDAPEGDGYLLSVVGRLDEDRSDLVILDTQCLAAGPVATVKLPFRLRAALHGCWQSKN.

Fe cation-binding residues include His-167, His-218, His-282, and His-471.

This sequence belongs to the carotenoid oxygenase family. As to quaternary structure, monomer. It depends on Fe(2+) as a cofactor.

It catalyses the reaction (E)-isoeugenol + O2 = vanillin + acetaldehyde. Inhibited by HgCl(2), AgNO(3), CuCl(2), phenylhydrazine, 8-hydroxyquinoline, R-cycloserine and p-chloromercuribenzoic acid. In terms of biological role, involved in isoeugenol degradation. Catalyzes the oxidative cleavage of the side chain double-bond of isoeugenol to form vanillin and acetaldehyde. This Pseudomonas putida (Arthrobacter siderocapsulatus) protein is Isoeugenol monooxygenase.